Consider the following 358-residue polypeptide: Acyl-CoA desaturase 1 (358 aa).

Over 1-71 the chain is Cytoplasmic; that stretch reads MPAHMLQEIS…EGPPPKLEYV (71 aa). Residues 8–24 show a composition bias toward low complexity; it reads EISSSYTTTTTITEPPS. The disordered stretch occupies residues 8–33; the sequence is EISSSYTTTTTITEPPSGNLQNGREK. A helical membrane pass occupies residues 72-92; the sequence is WRNIILMALLHVGALYGITLI. Residue Asn74 participates in substrate binding. The Lumenal portion of the chain corresponds to 93-96; the sequence is PSSK. A helical transmembrane segment spans residues 97–117; it reads VYTLLWGIFYYLISALGITAG. The Cytoplasmic segment spans residues 118 to 216; the sequence is AHRLWSHRTY…EKLVMFQRRY (99 aa). Residues His119 and His124 each coordinate Fe cation. A Histidine box-1 motif is present at residues 119-124; the sequence is HRLWSH. Positions 147, 154, and 155 each coordinate substrate. Fe cation-binding residues include His156, His159, and His160. The Histidine box-2 motif lies at 156–160; the sequence is HRAHH. Residues Arg187 and Lys188 each coordinate substrate. A helical transmembrane segment spans residues 217–236; it reads YKPGLLLMCFILPTLVPWYC. At 237 to 240 the chain is on the lumenal side; that stretch reads WGET. The chain crosses the membrane as a helical span at residues 241–262; the sequence is FLHSLFVSTFLRYTLVLNATWL. Trp261 lines the substrate pocket. The Cytoplasmic segment spans residues 263 to 358; that stretch reads VNSAAHLYGY…RTGDGSHKSS (96 aa). The Fe cation site is built by His268, His297, His300, and His301. Residues 297–301 carry the Histidine box-3 motif; that stretch reads HNYHH.

It belongs to the fatty acid desaturase type 1 family. Requires Fe(2+) as cofactor. As to expression, detected in liver (at protein level). Detected in adipose tissue. Detected in liver when rats are kept on a fat-free diet, but not when their food contains unsaturated fatty acids.

Its subcellular location is the endoplasmic reticulum membrane. The protein resides in the membrane. It catalyses the reaction octadecanoyl-CoA + 2 Fe(II)-[cytochrome b5] + O2 + 2 H(+) = (9Z)-octadecenoyl-CoA + 2 Fe(III)-[cytochrome b5] + 2 H2O. In terms of biological role, stearoyl-CoA desaturase that utilizes O(2) and electrons from reduced cytochrome b5 to introduce the first double bond into saturated fatty acyl-CoA substrates. Catalyzes the insertion of a cis double bond at the Delta-9 position into fatty acyl-CoA substrates including palmitoyl-CoA and stearoyl-CoA. Gives rise to a mixture of 16:1 and 18:1 unsaturated fatty acids. Plays an important role in lipid biosynthesis. Plays an important role in regulating the expression of genes that are involved in lipogenesis and in regulating mitochondrial fatty acid oxidation. Plays an important role in body energy homeostasis. Contributes to the biosynthesis of membrane phospholipids, cholesterol esters and triglycerides. Required for normal development of sebaceous glands. Required for the biosynthesis of normal levels of Delta-9 unsaturated fatty acids and 1-alkyl-2,3-diacylglycerol in the Harderian gland. Required for normal production of meibum, an oily material that prevents drying of the cornea. This Rattus norvegicus (Rat) protein is Acyl-CoA desaturase 1 (Scd1).